Reading from the N-terminus, the 434-residue chain is MQVTVETLEGLERRLNITVPAANIEDAVTAELRNIAKNRRFDGFRKGKVPLKMVAKMYGKAVRQDVLGEVMQRHFIEAIVKEKINPAGAPTFAPVENKEGADLVFTATFEVYPEVELKGLENITVEKPLTEVKEADVEEMIETLRKQQATWVEVEEAAEAGKRVSIDFVGSIDGEEFEGGKAENFPLEMGAGRMIPGFEDGIAGKTAGMEFDIDVTFPEDYHAENLKGKAAKFAIKVNKVEARELPELNDEFVAKFGVAEGGVDALKAEVRKNMERELKQAVKTRIKEQAIEGLVKENEIDVPAALIEQEIHVLRQQAAQRFGGNPEAAAQLPRELFEEQAKRRVVVGLLLGEVIKSEELKADDEKVKALIEEMATAYEDPSEVIAYYEQNEQMMNNMRNVALEEQAIDAIIAKAQVTEKEVGFNELLNQQPAA.

Residues 161-246 (GKRVSIDFVG…VNKVEARELP (86 aa)) enclose the PPIase FKBP-type domain.

Belongs to the FKBP-type PPIase family. Tig subfamily.

It is found in the cytoplasm. The enzyme catalyses [protein]-peptidylproline (omega=180) = [protein]-peptidylproline (omega=0). In terms of biological role, involved in protein export. Acts as a chaperone by maintaining the newly synthesized protein in an open conformation. Functions as a peptidyl-prolyl cis-trans isomerase. The sequence is that of Trigger factor from Vibrio parahaemolyticus serotype O3:K6 (strain RIMD 2210633).